The primary structure comprises 237 residues: Ribitol-5-phosphate cytidylyltransferase (237 aa).

CTP-binding positions include 7-10 and 80-86; these read LAGG and GEDRNET.

This sequence belongs to the IspD/TarI cytidylyltransferase family. TarI subfamily.

The enzyme catalyses D-ribitol 5-phosphate + CTP + H(+) = CDP-L-ribitol + diphosphate. The protein operates within cell wall biogenesis; poly(ribitol phosphate) teichoic acid biosynthesis. Its function is as follows. Catalyzes the transfer of the cytidylyl group of CTP to D-ribitol 5-phosphate. This chain is Ribitol-5-phosphate cytidylyltransferase, found in Listeria monocytogenes serotype 4b (strain F2365).